Consider the following 926-residue polypeptide: OTU domain-containing protein 7A (926 aa).

Position 121 is a phosphoserine (Ser-121). Residues 170-413 (ERDLIEQATM…AVDPGKDWEW (244 aa)) form a TRAF-binding region. The catalytic stretch occupies residues 185 to 452 (AGRLNWWSTV…VTWIRIPSET (268 aa)). The region spanning 201-377 (LLPLATTGDG…QAHFSALVSM (177 aa)) is the OTU domain. The active site involves Asp-209. Cys-212 functions as the Nucleophile in the catalytic mechanism. His-370 functions as the Proton acceptor in the catalytic mechanism. 3 disordered regions span residues 455–517 (PLAQ…DSVA), 540–615 (GLVH…GDAW), and 671–779 (EQEQ…ARQS). Over residues 484–494 (VCSNSNSNNGK) the composition is skewed to low complexity. Residues 495 to 513 (NGKDKEKEKQRKDKDKTRA) are compositionally biased toward basic and acidic residues. Positions 497-512 (KDKEKEKQRKDKDKTR) match the Nuclear localization signal motif. 3 stretches are compositionally biased toward low complexity: residues 579–595 (GASA…PSPT), 680–691 (AAAAAAATATAT), and 731–750 (SPGT…AASP). Residues 751-767 (GPGGGARRAAPGTGGPT) show a composition bias toward gly residues. Position 880 is an omega-N-methylarginine (Arg-880). Residues 884 to 919 (GPAQRRCQRENCAFYGRAETEHFCSYCYREELRRRR) form an A20-type zinc finger. The Zn(2+) site is built by Cys-890, Cys-895, Cys-907, and Cys-910.

It belongs to the peptidase C64 family.

It is found in the cytoplasm. Its subcellular location is the nucleus. It carries out the reaction Thiol-dependent hydrolysis of ester, thioester, amide, peptide and isopeptide bonds formed by the C-terminal Gly of ubiquitin (a 76-residue protein attached to proteins as an intracellular targeting signal).. Its function is as follows. Deubiquitinase, which cleaves 'Lys-11'-linked polyubiquitin chains. This chain is OTU domain-containing protein 7A (Otud7a), found in Mus musculus (Mouse).